A 101-amino-acid chain; its full sequence is PAT complex subunit Asterix (101 aa).

Positions 1 to 26 (MADPRRPARVTRYKPPTTESNPALED) are disordered. Over 1 to 27 (MADPRRPARVTRYKPPTTESNPALEDP) the chain is Cytoplasmic. A helical membrane pass occupies residues 28–46 (TPDYMNLLGMVFSMCGLML). Residue K47 is a topological domain, lumenal. The chain crosses the membrane as a helical span at residues 48 to 65 (LKWCAWIAVYCSFISFAN). Over 66–69 (SRSS) the chain is Cytoplasmic. Residues 70-90 (EDTKQMMSSFMLSISAVVMSY) form a helical membrane-spanning segment. The Lumenal portion of the chain corresponds to 91–101 (LQNPQPMSPPW).

Belongs to the Asterix family. As to quaternary structure, component of the multi-pass translocon (MPT) complex.

It is found in the endoplasmic reticulum membrane. Functionally, component of the multi-pass translocon (MPT) complex that mediates insertion of multi-pass membrane proteins into the lipid bilayer of membranes. The MPT complex takes over after the SEC61 complex: following membrane insertion of the first few transmembrane segments of proteins by the SEC61 complex, the MPT complex occludes the lateral gate of the SEC61 complex to promote insertion of subsequent transmembrane regions. This Gallus gallus (Chicken) protein is PAT complex subunit Asterix (WDR83OS).